The sequence spans 340 residues: Phenylalanine--tRNA ligase alpha subunit (340 aa).

Residue Glu-255 coordinates Mg(2+).

It belongs to the class-II aminoacyl-tRNA synthetase family. Phe-tRNA synthetase alpha subunit type 1 subfamily. In terms of assembly, tetramer of two alpha and two beta subunits. Mg(2+) serves as cofactor.

It localises to the cytoplasm. The catalysed reaction is tRNA(Phe) + L-phenylalanine + ATP = L-phenylalanyl-tRNA(Phe) + AMP + diphosphate + H(+). The polypeptide is Phenylalanine--tRNA ligase alpha subunit (Exiguobacterium sibiricum (strain DSM 17290 / CCUG 55495 / CIP 109462 / JCM 13490 / 255-15)).